The sequence spans 210 residues: MADTKEMKKILFAPFLDNNPIALQVLGVCSALAVTTKLETAFVMTLAVMFVTAFSNLFVSLIRNHIPNSVRIIVQMAIIASLVIVVDQVLKAFVYDISKQLSVFVGLIITNCIVMGRAEAYAMKSAPLPSFIDGVGNGLGYGFVLITVAFFRELLGSGKLFGVEVLPLVSDGGWYQPNGLMLLAPSAFFLIGFMIWAIRIIRPAQVEAKE.

The next 6 membrane-spanning stretches (helical) occupy residues 10–30, 42–62, 72–92, 103–123, 131–151, and 178–198; these read ILFA…GVCS, FVMT…VSLI, IIVQ…VLKA, VFVG…AYAM, FIDG…VAFF, and NGLM…IWAI.

Belongs to the NqrDE/RnfAE family. Composed of six subunits; NqrA, NqrB, NqrC, NqrD, NqrE and NqrF.

It is found in the cell inner membrane. It catalyses the reaction a ubiquinone + n Na(+)(in) + NADH + H(+) = a ubiquinol + n Na(+)(out) + NAD(+). Its function is as follows. NQR complex catalyzes the reduction of ubiquinone-1 to ubiquinol by two successive reactions, coupled with the transport of Na(+) ions from the cytoplasm to the periplasm. NqrA to NqrE are probably involved in the second step, the conversion of ubisemiquinone to ubiquinol. The chain is Na(+)-translocating NADH-quinone reductase subunit D from Photobacterium profundum (strain SS9).